The following is a 93-amino-acid chain: Alpha-defensin 24 (93 aa).

The N-terminal stretch at 1 to 19 (MKTLILLSALVLLAFQVQA) is a signal peptide. A propeptide spanning residues 20–58 (DPIQNTDEETKTEEQPGEEDQAVSVSFGDPEGASLQEES) is cleaved from the precursor. Positions 23–54 (QNTDEETKTEEQPGEEDQAVSVSFGDPEGASL) are disordered. Intrachain disulfides connect cysteine 64–cysteine 92, cysteine 66–cysteine 81, and cysteine 71–cysteine 91.

Belongs to the alpha-defensin family.

The protein resides in the secreted. Functionally, may have microbicidal activities. The sequence is that of Alpha-defensin 24 (Defa24) from Mus musculus (Mouse).